The following is a 379-amino-acid chain: Dual-specificity RNA methyltransferase RlmN (379 aa).

The Proton acceptor role is filled by glutamate 90. In terms of domain architecture, Radical SAM core spans 96 to 348 (EPNRGTLCVS…TTVRKTRGDD (253 aa)). A disulfide bridge connects residues cysteine 103 and cysteine 353. Residues cysteine 110, cysteine 114, and cysteine 117 each contribute to the [4Fe-4S] cluster site. Residues 179–180 (GE), serine 211, 233–235 (SLH), and asparagine 310 contribute to the S-adenosyl-L-methionine site. Cysteine 353 (S-methylcysteine intermediate) is an active-site residue.

It belongs to the radical SAM superfamily. RlmN family. The cofactor is [4Fe-4S] cluster.

It localises to the cytoplasm. The catalysed reaction is adenosine(2503) in 23S rRNA + 2 reduced [2Fe-2S]-[ferredoxin] + 2 S-adenosyl-L-methionine = 2-methyladenosine(2503) in 23S rRNA + 5'-deoxyadenosine + L-methionine + 2 oxidized [2Fe-2S]-[ferredoxin] + S-adenosyl-L-homocysteine. It catalyses the reaction adenosine(37) in tRNA + 2 reduced [2Fe-2S]-[ferredoxin] + 2 S-adenosyl-L-methionine = 2-methyladenosine(37) in tRNA + 5'-deoxyadenosine + L-methionine + 2 oxidized [2Fe-2S]-[ferredoxin] + S-adenosyl-L-homocysteine. Functionally, specifically methylates position 2 of adenine 2503 in 23S rRNA and position 2 of adenine 37 in tRNAs. m2A2503 modification seems to play a crucial role in the proofreading step occurring at the peptidyl transferase center and thus would serve to optimize ribosomal fidelity. This is Dual-specificity RNA methyltransferase RlmN from Nitrosomonas eutropha (strain DSM 101675 / C91 / Nm57).